Consider the following 437-residue polypeptide: Zinc finger CCCH domain-containing protein 40 (437 aa).

The C3H1-type zinc-finger motif lies at 6–33 (MYKTKLCILFNKTGDCSRPNCTFAHGNA). Positions 35–107 (LRRPGESSFT…MPFENRRDKD (73 aa)) are disordered. The segment covering 48-85 (HNMDSDLRDRRHNMDSDLRDRLGRQFSPERRPSLDRSG) has biased composition (basic and acidic residues). Residues 145-244 (NNVLEEQLKD…LGNQLSTYLA (100 aa)) are a coiled coil. Serine 259 carries the post-translational modification Phosphoserine. Disordered regions lie at residues 266-360 (RNLR…RRRF) and 380-437 (EFDD…DDSV). Residues 307–319 (RGEEEKVENEKKR) are compositionally biased toward basic and acidic residues. 2 stretches are compositionally biased toward acidic residues: residues 333-343 (EEESGAWNDED) and 383-392 (DVAESEEENP). Residues 426–437 (MEQKKAYDDDSV) are compositionally biased toward basic and acidic residues.

The polypeptide is Zinc finger CCCH domain-containing protein 40 (Arabidopsis thaliana (Mouse-ear cress)).